Reading from the N-terminus, the 106-residue chain is Small ribosomal subunit protein uS10 (106 aa).

This sequence belongs to the universal ribosomal protein uS10 family. In terms of assembly, part of the 30S ribosomal subunit.

Its function is as follows. Involved in the binding of tRNA to the ribosomes. The chain is Small ribosomal subunit protein uS10 from Synechococcus sp. (strain CC9902).